The sequence spans 470 residues: Arginine ADP-riboxanase OspC1 (470 aa).

NAD(+) contacts are provided by histidine 138, glutamine 139, serine 140, leucine 144, isoleucine 157, asparagine 167, phenylalanine 183, histidine 201, phenylalanine 206, aspartate 226, and glutamate 320. The active site involves glutamate 320. ANK repeat units follow at residues 363-392 (IALQ…ITRQ), 399-431 (HELY…DVNT), and 438-467 (SGDC…TSDN).

The protein belongs to the OspC family. In terms of assembly, interacts with host calmodulin (CALM1, CALM2 and/or CALM3); specifically interacts with the apo form of calmodulin, preventing calcium-binding.

Its subcellular location is the secreted. The protein localises to the host nucleus. The enzyme catalyses L-arginyl-[protein] + NAD(+) = ADP-riboxanated L-argininyl-[protein] + nicotinamide + NH4(+) + H(+). In terms of biological role, ADP-riboxanase effector that mediates arginine ADP-riboxanation of host caspases. ADP-riboxanation of host apoptotic caspases (CASP3, CASP8 and CASP9) prevents their activation, thereby inhibiting host cell extrinsic and intrinsic apoptosis. Does not catalyze ADP-riboxanation of host CASP4/CASP11. Independently of its ADP-riboxanase activity, acts as an inhibitor of calcium signaling by inhibiting host calmodulin, preventing activation of the JAK-STAT signaling pathway in response to interferon-beta. Mechanistically, acts by binding to the apo form of calmodulin, preventing calcium-binding and ability to activate host CaMK2 (CAMKII), which is required to stimulate the JAK-STAT signaling pathway in response to interferon-beta. This is Arginine ADP-riboxanase OspC1 from Shigella flexneri.